The chain runs to 307 residues: Porphobilinogen deaminase (307 aa).

S-(dipyrrolylmethanemethyl)cysteine is present on C239.

This sequence belongs to the HMBS family. In terms of assembly, monomer. Dipyrromethane serves as cofactor.

It catalyses the reaction 4 porphobilinogen + H2O = hydroxymethylbilane + 4 NH4(+). It participates in porphyrin-containing compound metabolism; protoporphyrin-IX biosynthesis; coproporphyrinogen-III from 5-aminolevulinate: step 2/4. In terms of biological role, tetrapolymerization of the monopyrrole PBG into the hydroxymethylbilane pre-uroporphyrinogen in several discrete steps. In Campylobacter jejuni subsp. jejuni serotype O:2 (strain ATCC 700819 / NCTC 11168), this protein is Porphobilinogen deaminase (hemC).